We begin with the raw amino-acid sequence, 217 residues long: AFG2-interacting ribosome maturation factor (217 aa).

Part of the 55LCC heterohexameric ATPase complex composed at least of AIRIM, AFG2A, AFG2B and CINP. Does not associate with pre-60S ribosomal particles. Phosphorylated on serines by CK2 kinase.

The protein localises to the nucleus. The protein resides in the cytoplasm. Part of the 55LCC heterohexameric ATPase complex which is chromatin-associated and promotes replisome proteostasis to maintain replication fork progression and genome stability. Required for replication fork progression, sister chromatid cohesion, and chromosome stability. The ATPase activity is specifically enhanced by replication fork DNA and is coupled to cysteine protease-dependent cleavage of replisome substrates in response to replication fork damage. Uses ATPase activity to process replisome substrates in S-phase, facilitating their proteolytic turnover from chromatin to ensure DNA replication and mitotic fidelity. Involved in the cytoplasmic maturation steps of pre-60S ribosomal particles by promoting the release of shuttling protein RSL24D1/RLP24 from the pre-ribosomal particles. This chain is AFG2-interacting ribosome maturation factor (Airim), found in Mus musculus (Mouse).